A 1583-amino-acid chain; its full sequence is Transcriptional activator GLI3 (1583 aa).

An N-acetylmethionine modification is found at M1. Composition is skewed to polar residues over residues 1-10 (MEAQAHSSTA) and 58-78 (ITMQ…PSTS). Residues 1–78 (MEAQAHSSTA…NKISEEPSTS (78 aa)) form a disordered region. R175 is modified (omega-N-methylarginine). The tract at residues 368 to 475 (QSLGSAFGHS…DKDESKQEPE (108 aa)) is disordered. The segment covering 403–421 (VQVSSGPSESSQSKPTSES) has biased composition (low complexity). K438 is covalently cross-linked (Glycyl lysine isopeptide (Lys-Gly) (interchain with G-Cter in SUMO2)). Over residues 448–457 (SRGQQEQPEG) the composition is skewed to polar residues. Positions 461–474 (VKEEADKDESKQEP) are enriched in basic and acidic residues. K462 is covalently cross-linked (Glycyl lysine isopeptide (Lys-Gly) (interchain with G-Cter in SUMO2)). C2H2-type zinc fingers lie at residues 480 to 505 (TNCH…NNDH), 513 to 540 (FVCR…MRRH), 546 to 570 (HKCT…LRSH), 576 to 601 (YVCE…NRTH), and 607 to 632 (YVCK…KTVH). The tract at residues 620-728 (DPSSLRKHVK…PISNYSNSGL (109 aa)) is disordered. Positions 632–648 (HGPEAHVTKKQRGDMHP) are enriched in basic and acidic residues. S664 bears the Phosphoserine mark. Positions 684 to 699 (SKREECLQVKTVKAEK) are enriched in basic and acidic residues. Over residues 703–726 (SQPSPGGQSSCSSQQSPISNYSNS) the composition is skewed to low complexity. The tract at residues 745–845 (DETPIMDSTI…VDFTVLNTLN (101 aa)) is mediates interaction with DZIP1. K773 is covalently cross-linked (Glycyl lysine isopeptide (Lys-Gly) (interchain with G-Cter in ubiquitin)). A Glycyl lysine isopeptide (Lys-Gly) (interchain with G-Cter in SUMO2); alternate cross-link involves residue K779. Residue K779 forms a Glycyl lysine isopeptide (Lys-Gly) (interchain with G-Cter in ubiquitin); alternate linkage. Residues K784 and K800 each participate in a glycyl lysine isopeptide (Lys-Gly) (interchain with G-Cter in ubiquitin) cross-link. The interval 809-828 (GNGTQSNNNYSSGGPGTLLP) is disordered. Positions 810-820 (NGTQSNNNYSS) are enriched in polar residues. Phosphoserine; by PKA occurs at positions 849, 865, 877, 907, 980, and 1006. Over residues 863-880 (RSSGISPCFSSRRSSEAS) the composition is skewed to low complexity. Residues 863-918 (RSSGISPCFSSRRSSEASQAEGRPQNVSVADSYDPISTDASRRSSEASQGDGLPSL) are disordered. Residues 1164-1189 (EVSSGTSDLSSSKLKCGQQRPSAQQP) form a disordered region. Positions 1166-1175 (SSGTSDLSSS) are enriched in low complexity.

Belongs to the GLI C2H2-type zinc-finger protein family. In terms of assembly, the phosphorylated form interacts with BTRC. The full-length GLI3 form (GLI3FL) interacts with SUFU and this interaction regulates the formation of either repressor or activator forms of GLI3. Its association with SUFU is regulated by Hh signaling and dissociation of the SUFU-GLI3 interaction requires the presence of the ciliary motor KIF3A. Interacts with KIF7. The activator form of GLI3 (GLI3A) but not the repressor form (GLI3R) can interact with TRPS1. Interacts with ZIC1. Interacts with ZIC3 (via C2H2-type domains 3, 4 and 5); the interaction enhances its transcriptional activity. Interacts with WRD11; the interaction associates EMX1 with GLI3. Interacts with DZIP1; retains GLI3 within the cytoplasm. Phosphorylated by DYRK2 (in vitro). Phosphorylated on multiple sites by protein kinase A (PKA) and phosphorylation by PKA primes further phosphorylation by CK1 and GSK3. Phosphorylation is essential for its proteolytic processing. In terms of processing, transcriptional repressor GLI3R, a C-terminally truncated form, is generated from the full-length GLI3 protein (GLI3FL/GLI3-190) through proteolytic processing. This process requires PKA-primed phosphorylation of GLI3, ubiquitination of GLI3 and the presence of BTRC. GLI3FL is complexed with SUFU in the cytoplasm and is maintained in a neutral state. Without the Hh signal, the SUFU-GLI3 complex is recruited to cilia, leading to the efficient processing of GLI3FL into GLI3R. GLI3R formation leads to its dissociation from SUFU, allowing it to translocate into the nucleus, and repress Hh target genes. When Hh signaling is initiated, SUFU dissociates from GLI3FL and this has two consequences. First, GLI3R production is halted. Second, free GLI3FL translocates to the nucleus, where it is phosphorylated, destabilized, and converted to a transcriptional activator (GLI3A). Phosphorylated in vitro by ULK3.

The protein localises to the nucleus. The protein resides in the cytoplasm. Its subcellular location is the cell projection. It is found in the cilium. In terms of biological role, has a dual function as a transcriptional activator and a repressor of the sonic hedgehog (Shh) pathway, and plays a role in limb development. The full-length GLI3 form (GLI3FL) after phosphorylation and nuclear translocation, acts as an activator (GLI3A) while GLI3R, its C-terminally truncated form, acts as a repressor. A proper balance between the GLI3 activator and the repressor GLI3R, rather than the repressor gradient itself or the activator/repressor ratio gradient, specifies limb digit number and identity. In concert with TRPS1, plays a role in regulating the size of the zone of distal chondrocytes, in restricting the zone of PTHLH expression in distal cells and in activating chondrocyte proliferation. Binds to the minimal GLI-consensus sequence 5'-GGGTGGTC-3'. This chain is Transcriptional activator GLI3 (Gli3), found in Mus musculus (Mouse).